Here is a 191-residue protein sequence, read N- to C-terminus: Probable GTP-binding protein EngB (191 aa).

The region spanning 13-189 (DRLEVAFAGR…RAEIVALLPD (177 aa)) is the EngB-type G domain. GTP-binding positions include 21–28 (GRSNVGKS), 48–52 (GRTRE), 67–70 (DLPG), 134–137 (TKTD), and 168–170 (TSS). Mg(2+) is bound by residues serine 28 and threonine 50.

It belongs to the TRAFAC class TrmE-Era-EngA-EngB-Septin-like GTPase superfamily. EngB GTPase family. The cofactor is Mg(2+).

Necessary for normal cell division and for the maintenance of normal septation. The polypeptide is Probable GTP-binding protein EngB (Maricaulis maris (strain MCS10) (Caulobacter maris)).